The sequence spans 368 residues: MSESPKKVIVGMSGGVDSSVSAWLLQQQGYQVEGLFMKNWEEDDGEEYCTAAADLADAQAVCDKLGIELHTVNFAAEYWDNVFELFLEEYKAGRTPNPDILCNKEIKFKAFLEFAAEDLGADYIATGHYVRRADVNGKSRLLRGLDGNKDQSYFLYTLGHEQIAQSLFPVGELEKPQVRKIAEDLGLVTAKKKDSTGICFIGERKFRDFLGRYLPAQPGKIITVDGDEIGEHQGLMYHTLGQRKGLGIGGTKDGTEDPWYVVDKDVENNVLIVAQGHEHPRLMSVGLIAQQLHWVDREPFTGTLRCTVKTRYRQTDIPCTINALDDDRIEVIFDEPVAAVTPGQSAVFYSGEVCLGGGIIEQRLPLTV.

ATP is bound by residues 11-18 (GMSGGVDS) and M37. The tract at residues 97–99 (NPD) is interaction with target base in tRNA. Catalysis depends on C102, which acts as the Nucleophile. An intrachain disulfide couples C102 to C199. Position 127 (G127) interacts with ATP. Residues 149–151 (KDQ) are interaction with tRNA. Catalysis depends on C199, which acts as the Cysteine persulfide intermediate. Residues 311–312 (RY) are interaction with tRNA.

This sequence belongs to the MnmA/TRMU family. Interacts with TusE.

It is found in the cytoplasm. It carries out the reaction S-sulfanyl-L-cysteinyl-[protein] + uridine(34) in tRNA + AH2 + ATP = 2-thiouridine(34) in tRNA + L-cysteinyl-[protein] + A + AMP + diphosphate + H(+). Its function is as follows. Catalyzes the 2-thiolation of uridine at the wobble position (U34) of tRNA(Lys), tRNA(Glu) and tRNA(Gln), leading to the formation of s(2)U34, the first step of tRNA-mnm(5)s(2)U34 synthesis. Sulfur is provided by IscS, via a sulfur-relay system. Binds ATP and its substrate tRNAs. The chain is tRNA-specific 2-thiouridylase MnmA from Salmonella choleraesuis (strain SC-B67).